The chain runs to 440 residues: C4-dicarboxylate transport protein (440 aa).

The next 9 helical transmembrane spans lie at 15 to 35 (VLVA…TGVA), 46 to 66 (LIKM…IAGM), 78 to 98 (YALL…LVVV), 146 to 166 (AFAN…GFAL), 190 to 210 (IINM…AFTI), 224 to 244 (LMAC…GGIC), 291 to 311 (VVGL…SIYL), 332 to 352 (ITLL…TGSG), and 354 to 374 (IVLA…LALI). Residues 419 to 440 (GGSPLVDTRPTDDLGVAEGPAR) are disordered.

Belongs to the dicarboxylate/amino acid:cation symporter (DAACS) (TC 2.A.23) family.

The protein localises to the cell inner membrane. Responsible for the transport of dicarboxylates such as succinate, fumarate, and malate from the periplasm across the membrane. The sequence is that of C4-dicarboxylate transport protein from Pseudomonas entomophila (strain L48).